Here is a 684-residue protein sequence, read N- to C-terminus: Probable potassium transport system protein Kup (684 aa).

A run of 12 helical transmembrane segments spans residues 19-39 (ALLVTLGVVYGDIGTSPLYVM), 61-81 (VSLIFWTLLIITTVKYVLIAL), 104-124 (WLVLPAMVGGAALLADGMLTP), 151-171 (QVIWVTVLIITFLFFIQRFGT), 177-197 (AFGPIMFVWFTFLGVAGFIAL), 223-243 (MGLFILGSIFLATTGAEALYS), 255-275 (LSWPYVNICLVLNYFGQAVWL), 303-323 (LGAIILATLAAIIASQALISG), 352-372 (LYIPVVNTILWLACLAIIGYF), 381-401 (AYGLAITITMLMTTLLLYQYL), 407-427 (PAVVAIGTLIFFSAIETVFFI), and 433-453 (FLHGGYVTAMIAFIILAVMYV).

The protein belongs to the HAK/KUP transporter (TC 2.A.72) family.

It localises to the cell membrane. It carries out the reaction K(+)(in) + H(+)(in) = K(+)(out) + H(+)(out). In terms of biological role, transport of potassium into the cell. Likely operates as a K(+):H(+) symporter. This Lacticaseibacillus paracasei (strain ATCC 334 / BCRC 17002 / CCUG 31169 / CIP 107868 / KCTC 3260 / NRRL B-441) (Lactobacillus paracasei) protein is Probable potassium transport system protein Kup.